The sequence spans 103 residues: Protein translation factor SUI1 homolog (103 aa).

This sequence belongs to the SUI1 family.

This chain is Protein translation factor SUI1 homolog, found in Hyperthermus butylicus (strain DSM 5456 / JCM 9403 / PLM1-5).